The primary structure comprises 319 residues: Acetyl-coenzyme A carboxylase carboxyl transferase subunit alpha (319 aa).

The CoA carboxyltransferase C-terminal domain maps to 38-293; that stretch reads HALQDKLRMR…KAVLLNELDA (256 aa).

This sequence belongs to the AccA family. In terms of assembly, acetyl-CoA carboxylase is a heterohexamer composed of biotin carboxyl carrier protein (AccB), biotin carboxylase (AccC) and two subunits each of ACCase subunit alpha (AccA) and ACCase subunit beta (AccD).

It localises to the cytoplasm. It catalyses the reaction N(6)-carboxybiotinyl-L-lysyl-[protein] + acetyl-CoA = N(6)-biotinyl-L-lysyl-[protein] + malonyl-CoA. Its pathway is lipid metabolism; malonyl-CoA biosynthesis; malonyl-CoA from acetyl-CoA: step 1/1. In terms of biological role, component of the acetyl coenzyme A carboxylase (ACC) complex. First, biotin carboxylase catalyzes the carboxylation of biotin on its carrier protein (BCCP) and then the CO(2) group is transferred by the carboxyltransferase to acetyl-CoA to form malonyl-CoA. This is Acetyl-coenzyme A carboxylase carboxyl transferase subunit alpha from Stenotrophomonas maltophilia (strain K279a).